The primary structure comprises 202 residues: Superoxide dismutase [Mn] (202 aa).

Residues His27, His82, Asp164, and His168 each coordinate Mn(2+).

It belongs to the iron/manganese superoxide dismutase family. In terms of assembly, homodimer. The cofactor is Mn(2+).

It catalyses the reaction 2 superoxide + 2 H(+) = H2O2 + O2. Its function is as follows. Destroys superoxide anion radicals which are normally produced within the cells and which are toxic to biological systems. In Listeria ivanovii, this protein is Superoxide dismutase [Mn] (sodA).